We begin with the raw amino-acid sequence, 312 residues long: Phosphoribosylglycinamide formyltransferase, chloroplastic (312 aa).

A chloroplast-targeting transit peptide spans 1–73 (MEAQQIISRF…EVCSSSWRIW (73 aa)). 109–111 (GSN) is a N(1)-(5-phospho-beta-D-ribosyl)glycinamide binding site. Residues lysine 162, 187–190 (LKLI), and asparagine 204 each bind (6R)-10-formyltetrahydrofolate. Residue histidine 206 is the Proton donor of the active site. A (6R)-10-formyltetrahydrofolate-binding site is contributed by aspartate 247. Glutamate 276 provides a ligand contact to N(1)-(5-phospho-beta-D-ribosyl)glycinamide.

The protein belongs to the GART family.

The protein localises to the plastid. Its subcellular location is the chloroplast. The catalysed reaction is N(1)-(5-phospho-beta-D-ribosyl)glycinamide + (6R)-10-formyltetrahydrofolate = N(2)-formyl-N(1)-(5-phospho-beta-D-ribosyl)glycinamide + (6S)-5,6,7,8-tetrahydrofolate + H(+). The protein operates within purine metabolism; IMP biosynthesis via de novo pathway; N(2)-formyl-N(1)-(5-phospho-D-ribosyl)glycinamide from N(1)-(5-phospho-D-ribosyl)glycinamide (10-formyl THF route): step 1/1. In Vigna unguiculata (Cowpea), this protein is Phosphoribosylglycinamide formyltransferase, chloroplastic (PUR3).